The following is a 514-amino-acid chain: GMP synthase [glutamine-hydrolyzing] (514 aa).

Residues 9–199 enclose the Glutamine amidotransferase type-1 domain; the sequence is MILVLDFGGQ…LFEVCQCTGD (191 aa). Residue Cys-86 is the Nucleophile of the active site. Residues His-173 and Glu-175 contribute to the active site. The GMPS ATP-PPase domain occupies 200–389; that stretch reads WSMENFIEIE…LGLSDEIVWR (190 aa). 227–233 contributes to the ATP binding site; sequence SGGVDSS.

Homodimer.

It catalyses the reaction XMP + L-glutamine + ATP + H2O = GMP + L-glutamate + AMP + diphosphate + 2 H(+). It participates in purine metabolism; GMP biosynthesis; GMP from XMP (L-Gln route): step 1/1. Its function is as follows. Catalyzes the synthesis of GMP from XMP. This Exiguobacterium sibiricum (strain DSM 17290 / CCUG 55495 / CIP 109462 / JCM 13490 / 255-15) protein is GMP synthase [glutamine-hydrolyzing].